Reading from the N-terminus, the 165-residue chain is uncharacterized protein (165 aa).

Over residues 22-34 the composition is skewed to polar residues; it reads QQANQENMSSRTD. The tract at residues 22 to 45 is disordered; sequence QQANQENMSSRTDSPIPPFGESEQ.

This is an uncharacterized protein from Homo sapiens (Human).